The following is a 394-amino-acid chain: Guanine nucleotide-binding protein G(s) subunit alpha (394 aa).

The tract at residues 1–25 is disordered; the sequence is MGCLGDSKTEDQRNEEKAQREANKK. A lipid anchor (N-palmitoyl glycine) is attached at glycine 2. Residue cysteine 3 is the site of S-palmitoyl cysteine attachment. Residues 7 to 25 show a composition bias toward basic and acidic residues; it reads SKTEDQRNEEKAQREANKK. A G-alpha domain is found at 39–394; sequence ATHRLLLLGA…RMHLRQYELL (356 aa). The tract at residues 42–55 is G1 motif; the sequence is RLLLLGAGESGKST. 47 to 55 provides a ligand contact to GTP; sequence GAGESGKST. Serine 54 is a binding site for Mg(2+). The tract at residues 68–90 is disordered; the sequence is FNGEGGEEDPQAARSNSDGEKAT. The G2 motif stretch occupies residues 196–204; that stretch reads DLLRCRVLT. Residues 197–204, 223–227, 292–295, and alanine 366 contribute to the GTP site; these read LLRCRVLT, DVGGQ, and NKQD. A Mg(2+)-binding site is contributed by threonine 204. The segment at 219–228 is G3 motif; that stretch reads FHMFDVGGQR. The interval 288–295 is G4 motif; it reads ILFLNKQD. Positions 364-369 are G5 motif; that stretch reads TCAVDT.

This sequence belongs to the G-alpha family. G(s) subfamily. Heterotrimeric G proteins are composed of 3 units; alpha, beta and gamma. The alpha chain contains the guanine nucleotide binding site. Interacts with CRY1; the interaction may block GPCR-mediated regulation of cAMP concentrations. Interacts with ADCY6 and stimulates its adenylyl cyclase activity. Interacts with ADCY2 and ADCY5. Stimulates the ADCY5 adenylyl cyclase activity. Interaction with SASH1.

The protein resides in the cell membrane. Functionally, guanine nucleotide-binding proteins (G proteins) function as transducers in numerous signaling pathways controlled by G protein-coupled receptors (GPCRs). Signaling involves the activation of adenylyl cyclases, resulting in increased levels of the signaling molecule cAMP. GNAS functions downstream of several GPCRs, including beta-adrenergic receptors. Stimulates the Ras signaling pathway via RAPGEF2. The protein is Guanine nucleotide-binding protein G(s) subunit alpha (GNAS) of Cricetulus longicaudatus (Long-tailed dwarf hamster).